The following is a 160-amino-acid chain: MNIWVDADACPAEVKDILWRAAQRWQVPVTLVANQLLRVPASPWMRAVQVPRGFDVADAHIVASAVPGDLVITADIPLAAEVVGKGVAAMSWRGEVFDAGSIGERLTMRDMMEELRAGGVDIGGPAAFGQADRRAFANALDAAMQRRARTRGAGGKPGVV.

This sequence belongs to the UPF0178 family.

This Bordetella bronchiseptica (strain ATCC BAA-588 / NCTC 13252 / RB50) (Alcaligenes bronchisepticus) protein is UPF0178 protein BB1267.